A 331-amino-acid chain; its full sequence is ESX-3 secretion system protein EccE3 (331 aa).

The next 2 membrane-spanning stretches (helical) occupy residues 11–31 and 37–57; these read GRVT…PWQS and LLGV…GLYF.

Belongs to the EccE family. As to quaternary structure, part of the ESX-3 / type VII secretion system (T7SS), which is composed of cytosolic and membrane components. The ESX-3 membrane complex is composed of EccB3, EccC3, EccD3 and EccE3.

It is found in the cell inner membrane. Its function is as follows. Part of the ESX-3 specialized secretion system, which is important for iron and zinc uptake or homeostasis. In Mycobacterium tuberculosis (strain CDC 1551 / Oshkosh), this protein is ESX-3 secretion system protein EccE3.